The following is a 163-amino-acid chain: MSTADRYRKVFPVTWEQLHRDAKALSWRLLEKGPYKGIIAIARGGLVPAAVIARELDIHLVETICISSYQWQEQTSSHKVLKTVEGRGEGWLIIDDLVDTGGTARLVREMLPEAHFATVYAKPAGRPLVDTFITEVSQDTWILFPWDSEVQYVVPLVNQPQQS.

Residues 43-44 and 95-103 each bind 5-phospho-alpha-D-ribose 1-diphosphate; these read RG and DDLVDTGGT. Asp-96 serves as a coordination point for Mg(2+). Guanine contacts are provided by Asp-99 and Ile-142. Xanthine is bound by residues Asp-99 and Ile-142. GMP contacts are provided by residues 99–103 and 141–142; these read DTGGT and WI.

It belongs to the purine/pyrimidine phosphoribosyltransferase family. XGPT subfamily. Homotetramer. Mg(2+) is required as a cofactor.

It localises to the cell inner membrane. The catalysed reaction is GMP + diphosphate = guanine + 5-phospho-alpha-D-ribose 1-diphosphate. It carries out the reaction XMP + diphosphate = xanthine + 5-phospho-alpha-D-ribose 1-diphosphate. The enzyme catalyses IMP + diphosphate = hypoxanthine + 5-phospho-alpha-D-ribose 1-diphosphate. It participates in purine metabolism; GMP biosynthesis via salvage pathway; GMP from guanine: step 1/1. The protein operates within purine metabolism; XMP biosynthesis via salvage pathway; XMP from xanthine: step 1/1. Purine salvage pathway enzyme that catalyzes the transfer of the ribosyl-5-phosphate group from 5-phospho-alpha-D-ribose 1-diphosphate (PRPP) to the N9 position of the 6-oxopurines guanine and xanthine to form the corresponding ribonucleotides GMP (guanosine 5'-monophosphate) and XMP (xanthosine 5'-monophosphate), with the release of PPi. To a lesser extent, also acts on hypoxanthine. This Nitratidesulfovibrio vulgaris (strain DP4) (Desulfovibrio vulgaris) protein is Xanthine-guanine phosphoribosyltransferase.